Here is a 256-residue protein sequence, read N- to C-terminus: Probable ABC transporter ATP-binding protein SPy_0285/M5005_Spy0242 (256 aa).

The ABC transporter domain occupies 4 to 246 (LEINNLHVSI…EKEGYAGIAQ (243 aa)). Residue 36 to 43 (GPNGTGKS) coordinates ATP.

The protein belongs to the ABC transporter superfamily. Ycf16 family.

It localises to the cell membrane. The protein is Probable ABC transporter ATP-binding protein SPy_0285/M5005_Spy0242 of Streptococcus pyogenes serotype M1.